The chain runs to 141 residues: Putative RING-H2 finger protein ATL62 (141 aa).

A helical transmembrane segment spans residues 14–32 (FFAILTVFYSIFRCCLAYC). The RING-type; degenerate zinc finger occupies 79–121 (CVVCLSKFIDEDKARVLPSCNHCFHFDFTDTWLHSDYTCPNCR).

This sequence belongs to the RING-type zinc finger family. ATL subfamily.

The protein resides in the membrane. The enzyme catalyses S-ubiquitinyl-[E2 ubiquitin-conjugating enzyme]-L-cysteine + [acceptor protein]-L-lysine = [E2 ubiquitin-conjugating enzyme]-L-cysteine + N(6)-ubiquitinyl-[acceptor protein]-L-lysine.. Its pathway is protein modification; protein ubiquitination. The protein is Putative RING-H2 finger protein ATL62 (ATL62) of Arabidopsis thaliana (Mouse-ear cress).